The primary structure comprises 160 residues: GTP-dependent dephospho-CoA kinase (160 aa).

GTP-binding residues include aspartate 45, isoleucine 46, valine 47, aspartate 59, lysine 61, glutamate 108, and aspartate 130.

The protein belongs to the GTP-dependent DPCK family.

It carries out the reaction 3'-dephospho-CoA + GTP = GDP + CoA + H(+). It participates in cofactor biosynthesis; coenzyme A biosynthesis. Its function is as follows. Catalyzes the GTP-dependent phosphorylation of the 3'-hydroxyl group of dephosphocoenzyme A to form coenzyme A (CoA). This Staphylothermus marinus (strain ATCC 43588 / DSM 3639 / JCM 9404 / F1) protein is GTP-dependent dephospho-CoA kinase.